The sequence spans 176 residues: MQFLNTFSKSRISWLLLLLCIVFFEGSALFFQHGMKLGPCVMCIYERVAMMGIAFAALLGAIAPQYAIIRWAGLIAWGYSAVRGLQLSIEHVGYQFNPSPFATCDLFVQFPNWAPLNKWVPWMFEAYGNCAEVVWTFLGQSMPQWLVIIFAGNLVALALIVIAQFFSKKTNTILDM.

The Cytoplasmic portion of the chain corresponds to 1–13 (MQFLNTFSKSRIS). The helical transmembrane segment at 14 to 30 (WLLLLLCIVFFEGSALF) threads the bilayer. Topologically, residues 31–48 (FQHGMKLGPCVMCIYERV) are periplasmic. A disulfide bridge links Cys-40 with Cys-43. The chain crosses the membrane as a helical span at residues 49-64 (AMMGIAFAALLGAIAP). The Cytoplasmic portion of the chain corresponds to 65-71 (QYAIIRW). Residues 72-89 (AGLIAWGYSAVRGLQLSI) form a helical membrane-spanning segment. Topologically, residues 90–144 (EHVGYQFNPSPFATCDLFVQFPNWAPLNKWVPWMFEAYGNCAEVVWTFLGQSMPQ) are periplasmic. A disulfide bridge connects residues Cys-104 and Cys-130. A helical membrane pass occupies residues 145–163 (WLVIIFAGNLVALALIVIA). At 164–176 (QFFSKKTNTILDM) the chain is on the cytoplasmic side.

Belongs to the DsbB family.

The protein resides in the cell inner membrane. Functionally, required for disulfide bond formation in some periplasmic proteins. Acts by oxidizing the DsbA protein. The protein is Disulfide bond formation protein B of Photobacterium profundum (strain SS9).